The chain runs to 362 residues: 3-dehydroquinate synthase (362 aa).

Residues 70–75, 104–108, 128–129, Lys141, and Lys150 contribute to the NAD(+) site; these read DGEQYK, GVIGD, and TT. Glu183, His246, and His263 together coordinate Zn(2+).

Belongs to the sugar phosphate cyclases superfamily. Dehydroquinate synthase family. The cofactor is NAD(+). Co(2+) serves as cofactor. It depends on Zn(2+) as a cofactor.

The protein localises to the cytoplasm. It carries out the reaction 7-phospho-2-dehydro-3-deoxy-D-arabino-heptonate = 3-dehydroquinate + phosphate. It participates in metabolic intermediate biosynthesis; chorismate biosynthesis; chorismate from D-erythrose 4-phosphate and phosphoenolpyruvate: step 2/7. Functionally, catalyzes the conversion of 3-deoxy-D-arabino-heptulosonate 7-phosphate (DAHP) to dehydroquinate (DHQ). This chain is 3-dehydroquinate synthase, found in Pasteurella multocida (strain Pm70).